Here is a 78-residue protein sequence, read N- to C-terminus: Large ribosomal subunit protein bL28 (78 aa).

Residues 1–23 (MSRKCQITGKKANNAMAVSHSHR) form a disordered region.

The protein belongs to the bacterial ribosomal protein bL28 family.

The polypeptide is Large ribosomal subunit protein bL28 (Picosynechococcus sp. (strain ATCC 27264 / PCC 7002 / PR-6) (Agmenellum quadruplicatum)).